Here is a 120-residue protein sequence, read N- to C-terminus: Small ribosomal subunit protein bS6 (120 aa).

Positions 97 to 112 (SNEPSPILKNQSTENT) are enriched in polar residues. The disordered stretch occupies residues 97 to 120 (SNEPSPILKNQSTENTPVIDVTAN).

Belongs to the bacterial ribosomal protein bS6 family.

Functionally, binds together with bS18 to 16S ribosomal RNA. In Rickettsia bellii (strain OSU 85-389), this protein is Small ribosomal subunit protein bS6.